A 48-amino-acid chain; its full sequence is uncharacterized protein (48 aa).

A helical membrane pass occupies residues 6 to 26 (IILLMIVCLVVSVLVVVWIIL).

The protein localises to the host membrane. This is an uncharacterized protein from Spiroplasma melliferum (SpV4).